The sequence spans 626 residues: tRNA uridine 5-carboxymethylaminomethyl modification enzyme MnmG (626 aa).

An FAD-binding site is contributed by 13–18; the sequence is GGGHAG. Residue 273–287 participates in NAD(+) binding; that stretch reads GPRYCPSIEDKIHRF.

This sequence belongs to the MnmG family. As to quaternary structure, homodimer. Heterotetramer of two MnmE and two MnmG subunits. It depends on FAD as a cofactor.

The protein resides in the cytoplasm. NAD-binding protein involved in the addition of a carboxymethylaminomethyl (cmnm) group at the wobble position (U34) of certain tRNAs, forming tRNA-cmnm(5)s(2)U34. In Acinetobacter baumannii (strain ATCC 17978 / DSM 105126 / CIP 53.77 / LMG 1025 / NCDC KC755 / 5377), this protein is tRNA uridine 5-carboxymethylaminomethyl modification enzyme MnmG.